The sequence spans 488 residues: Glutamyl-tRNA(Gln) amidotransferase subunit A (488 aa).

Catalysis depends on charge relay system residues Lys77 and Ser152. Ser176 (acyl-ester intermediate) is an active-site residue.

The protein belongs to the amidase family. GatA subfamily. Heterotrimer of A, B and C subunits.

It carries out the reaction L-glutamyl-tRNA(Gln) + L-glutamine + ATP + H2O = L-glutaminyl-tRNA(Gln) + L-glutamate + ADP + phosphate + H(+). Functionally, allows the formation of correctly charged Gln-tRNA(Gln) through the transamidation of misacylated Glu-tRNA(Gln) in organisms which lack glutaminyl-tRNA synthetase. The reaction takes place in the presence of glutamine and ATP through an activated gamma-phospho-Glu-tRNA(Gln). The sequence is that of Glutamyl-tRNA(Gln) amidotransferase subunit A from Streptococcus equi subsp. zooepidemicus (strain MGCS10565).